The sequence spans 203 residues: uncharacterized protein (203 aa).

A PilZ domain is found at 90 to 188; it reads EKRQHVRVQP…YENIIGRYVM (99 aa).

The protein to A.aeolicus aq_820 and aq_1583.

This is an uncharacterized protein from Aquifex aeolicus (strain VF5).